Here is a 1232-residue protein sequence, read N- to C-terminus: Anion exchange protein 3 (1232 aa).

Residues Met-1–Gly-11 are compositionally biased toward pro residues. Disordered stretches follow at residues Met-1–Arg-316 and Asn-429–His-498. Over Met-1–Cys-708 the chain is Cytoplasmic. Positions Asp-58–Arg-75 are enriched in basic and acidic residues. 2 stretches are compositionally biased toward basic residues: residues His-76–Arg-97 and Arg-104–Glu-113. Residues Val-134–Pro-152 are compositionally biased toward acidic residues. 4 positions are modified to phosphoserine: Ser-167, Ser-170, Ser-175, and Ser-198. A compositionally biased stretch (low complexity) spans Gln-200–Arg-214. Over residues Asp-267–Gly-279 the composition is skewed to basic and acidic residues. Positions Val-280–Ser-289 are enriched in basic residues. Arg-295 is subject to Omega-N-methylarginine. Over residues Leu-305–Arg-316 the composition is skewed to basic residues. Polar residues predominate over residues Asn-440–Leu-450. Positions His-481–His-498 are enriched in basic and acidic residues. The next 5 helical transmembrane spans lie at Val-709–Gly-731, Leu-737–Phe-774, Val-794–Val-816, Ile-826–Phe-847, and Ala-893–Leu-910. A membrane (anion exchange) region spans residues Val-709 to Val-1232. Topologically, residues Arg-911–Arg-925 are cytoplasmic. A run of 5 helical transmembrane segments spans residues Ile-926–Ile-946, Pro-980–Met-1002, Leu-1028–Ala-1049, Val-1083–Ser-1128, and Met-1155–Leu-1191. Cys-1165 carries S-palmitoyl cysteine lipidation.

The protein belongs to the anion exchanger (TC 2.A.31) family.

It localises to the cell membrane. The catalysed reaction is hydrogencarbonate(in) + chloride(out) = hydrogencarbonate(out) + chloride(in). Sodium-independent anion exchanger which mediates the electroneutral exchange of chloride for bicarbonate ions across the cell membrane. May be involved in the regulation of intracellular pH, and the modulation of cardiac action potential. This is Anion exchange protein 3 (SLC4A3) from Pongo abelii (Sumatran orangutan).